The sequence spans 621 residues: Probable bifunctional dTTP/UTP pyrophosphatase/methyltransferase protein (621 aa).

Positions 11–223 are MAF-like; it reads LHKRVVLASA…PPRPEDLRRS (213 aa). Phosphoserine is present on Ser-21. The active-site Proton acceptor; for pyrophosphatase activity is the Asp-88. At Ser-228 the chain carries Phosphoserine. Thr-234 carries the phosphothreonine modification. The interval 235–279 is disordered; it reads FEDLSDVEGGGSEPTQRDAGSRDEKAEAGEAGQATAEAECHRTRE. Ser-239 bears the Phosphoserine mark. Residues 249–262 are compositionally biased toward basic and acidic residues; the sequence is TQRDAGSRDEKAEA. Residues 277–621 form an ASMT-like region; it reads TRETLPPFPT…DAILATKVAP (345 aa). Ser-421 carries the phosphoserine modification. Residues Asp-482, 508 to 510, and Arg-525 each bind S-adenosyl-L-methionine; that span reads GDF.

The protein in the N-terminal section; belongs to the Maf family. YhdE subfamily. It in the C-terminal section; belongs to the class I-like SAM-binding methyltransferase superfamily. Cation-independent O-methyltransferase family. As to quaternary structure, homodimer. It depends on a divalent metal cation as a cofactor. Widely expressed. In adult, highly expressed in pancreas, placenta, fibroblast, thymus, prostate, testis, ovary and colon. Expressed at lower levels in spleen, small intestine and leukocytes. In fetus, expressed at high levels in the lung and kidney and at lower level in brain and liver.

It carries out the reaction dTTP + H2O = dTMP + diphosphate + H(+). The enzyme catalyses UTP + H2O = UMP + diphosphate + H(+). It catalyses the reaction CTP + H2O = CMP + diphosphate + H(+). The catalysed reaction is psi-UTP + H2O = psi-UMP + diphosphate + H(+). It carries out the reaction 5-methyl-UTP + H2O = 5-methyl-UMP + diphosphate + H(+). The enzyme catalyses 5-methyl-CTP + H2O = 5-methyl-CMP + diphosphate + H(+). In terms of biological role, nucleoside triphosphate pyrophosphatase that hydrolyzes dTTP and UTP. Can also hydrolyze CTP and the modified nucleotides pseudo-UTP, 5-methyl-UTP (m(5)UTP) and 5-methyl-CTP (m(5)CTP). Has weak activity with dCTP, 8-oxo-GTP and N(4)-methyl-dCTP. May have a dual role in cell division arrest and in preventing the incorporation of modified nucleotides into cellular nucleic acids. In addition, the presence of the putative catalytic domain of S-adenosyl-L-methionine binding in the C-terminal region argues for a methyltransferase activity. The protein is Probable bifunctional dTTP/UTP pyrophosphatase/methyltransferase protein (ASMTL) of Homo sapiens (Human).